Here is a 331-residue protein sequence, read N- to C-terminus: Biotin synthase (331 aa).

In terms of domain architecture, Radical SAM core spans 48-278 (FDSQKFEFCS…SAELRLCGGR (231 aa)). [4Fe-4S] cluster is bound by residues Cys66, Cys70, and Cys73. [2Fe-2S] cluster contacts are provided by Cys110, Cys143, Cys203, and Arg273.

It belongs to the radical SAM superfamily. Biotin synthase family. Homodimer. Requires [4Fe-4S] cluster as cofactor. The cofactor is [2Fe-2S] cluster.

It catalyses the reaction (4R,5S)-dethiobiotin + (sulfur carrier)-SH + 2 reduced [2Fe-2S]-[ferredoxin] + 2 S-adenosyl-L-methionine = (sulfur carrier)-H + biotin + 2 5'-deoxyadenosine + 2 L-methionine + 2 oxidized [2Fe-2S]-[ferredoxin]. It participates in cofactor biosynthesis; biotin biosynthesis; biotin from 7,8-diaminononanoate: step 2/2. Its function is as follows. Catalyzes the conversion of dethiobiotin (DTB) to biotin by the insertion of a sulfur atom into dethiobiotin via a radical-based mechanism. This Hydrogenobaculum sp. (strain Y04AAS1) protein is Biotin synthase.